Reading from the N-terminus, the 221-residue chain is Arginine ABC transporter permease protein ArtQ (221 aa).

The ABC transmembrane type-1 domain maps to 13–206 (ALMTLGLAVC…AVTLISQVGI (194 aa)). Transmembrane regions (helical) follow at residues 17–37 (LGLA…FAVL), 49–69 (VFVA…VYFG), 82–102 (IEFG…AAYA), 121–141 (GAAL…PQVW), and 186–206 (TWYG…QVGI).

Belongs to the binding-protein-dependent transport system permease family. HisMQ subfamily. As to quaternary structure, the complex is composed of two ATP-binding proteins (ArtP), two transmembrane proteins (ArtM and ArtQ) and a solute-binding protein (ArtI).

It is found in the cell inner membrane. Functionally, part of the ABC transporter complex ArtPIQM involved in arginine transport. Probably responsible for the translocation of the substrate across the membrane. In Haemophilus influenzae (strain ATCC 51907 / DSM 11121 / KW20 / Rd), this protein is Arginine ABC transporter permease protein ArtQ (artQ).